The primary structure comprises 350 residues: Quercetin 2,3-dioxygenase (350 aa).

Residues 1 to 145 (DTSSLIVEDA…FYYLGTNATD (145 aa)) form a cupin 1 region. Cu cation is bound by residues histidine 66, histidine 68, and glutamate 73. Histidine 66 is a substrate binding site. Glutamate 73 lines the substrate pocket. N-linked (GlcNAc...) asparagine glycans are attached at residues asparagine 90 and asparagine 109. Histidine 112 serves as a coordination point for Cu cation. Asparagine 142 carries N-linked (GlcNAc...) asparagine glycosylation. A linker region spans residues 146–205 (TTHTPYIPSSSDSSSTTGPDSSTISTLQSFDVYAELSFTPRTDTVNGTAPANTVWHTGAN). The disordered stretch occupies residues 148–167 (HTPYIPSSSDSSSTTGPDSS). The segment covering 152 to 167 (IPSSSDSSSTTGPDSS) has biased composition (low complexity). 2 N-linked (GlcNAc...) asparagine glycosylation sites follow: asparagine 191 and asparagine 248. Residues 206-350 (ALASTAGDPY…WSSVSFPADW (145 aa)) form a cupin 2 region.

As to quaternary structure, homodimer. Cu cation is required as a cofactor. In terms of processing, the N-linked glycan at Asn-191 consists of Man(5)-GlcNAc(2).

The enzyme catalyses quercetin + O2 = 2-(3,4-dihydroxybenzoyloxy)-4,6-dihydroxybenzoate + CO. It participates in flavonoid metabolism; quercetin degradation. Inhibited by diethyldithiocarbamate and kojic acid. Functionally, performs the first step in the degradation of the flavonoid quercetin by a dioxygenase reaction. The enzyme catalyzes the cleavage of the O-heteroaromatic ring of the flavonol quercetin yielding the depside 2-protocatechuoyl-phloroglucinol carboxylic acid and carbon monoxide. This involves the remarkable dioxygenolytic cleavage of two carbon-carbon bonds. The polypeptide is Quercetin 2,3-dioxygenase (Aspergillus japonicus).